A 167-amino-acid chain; its full sequence is Mediator of RNA polymerase II transcription subunit 10 (167 aa).

Residues 54-92 (STHTKPHPPPPPPPQPTDPTTAAAPALRDNPDPPLSSIQ) are disordered. The span at 60-70 (HPPPPPPPQPT) shows a compositional bias: pro residues.

It belongs to the Mediator complex subunit 10 family. As to quaternary structure, component of the Mediator complex.

The protein resides in the nucleus. Its function is as follows. Component of the Mediator complex, a coactivator involved in the regulated transcription of nearly all RNA polymerase II-dependent genes. Mediator functions as a bridge to convey information from gene-specific regulatory proteins to the basal RNA polymerase II transcription machinery. Mediator is recruited to promoters by direct interactions with regulatory proteins and serves as a scaffold for the assembly of a functional preinitiation complex with RNA polymerase II and the general transcription factors. The polypeptide is Mediator of RNA polymerase II transcription subunit 10 (nut2) (Aspergillus clavatus (strain ATCC 1007 / CBS 513.65 / DSM 816 / NCTC 3887 / NRRL 1 / QM 1276 / 107)).